The chain runs to 155 residues: Small ribosomal subunit protein uS7 (155 aa).

This sequence belongs to the universal ribosomal protein uS7 family. In terms of assembly, part of the 30S ribosomal subunit. Contacts proteins S9 and S11.

Functionally, one of the primary rRNA binding proteins, it binds directly to 16S rRNA where it nucleates assembly of the head domain of the 30S subunit. Is located at the subunit interface close to the decoding center, probably blocks exit of the E-site tRNA. This Sulfurovum sp. (strain NBC37-1) protein is Small ribosomal subunit protein uS7.